The chain runs to 301 residues: Acetylglutamate kinase (301 aa).

Substrate-binding positions include 68–69, Arg-90, and Asn-195; that span reads GG.

The protein belongs to the acetylglutamate kinase family. ArgB subfamily.

Its subcellular location is the cytoplasm. It catalyses the reaction N-acetyl-L-glutamate + ATP = N-acetyl-L-glutamyl 5-phosphate + ADP. It participates in amino-acid biosynthesis; L-arginine biosynthesis; N(2)-acetyl-L-ornithine from L-glutamate: step 2/4. In terms of biological role, catalyzes the ATP-dependent phosphorylation of N-acetyl-L-glutamate. The polypeptide is Acetylglutamate kinase (Pseudomonas fluorescens (strain ATCC BAA-477 / NRRL B-23932 / Pf-5)).